Consider the following 478-residue polypeptide: Glutamate--tRNA ligase (478 aa).

Positions 9-19 (PSPTGLLHIGT) match the 'HIGH' region motif. Residues 248 to 252 (KLSKR) carry the 'KMSKS' region motif. Lysine 251 provides a ligand contact to ATP.

Belongs to the class-I aminoacyl-tRNA synthetase family. Glutamate--tRNA ligase type 1 subfamily. In terms of assembly, monomer.

It localises to the cytoplasm. It catalyses the reaction tRNA(Glu) + L-glutamate + ATP = L-glutamyl-tRNA(Glu) + AMP + diphosphate. Its function is as follows. Catalyzes the attachment of glutamate to tRNA(Glu) in a two-step reaction: glutamate is first activated by ATP to form Glu-AMP and then transferred to the acceptor end of tRNA(Glu). The chain is Glutamate--tRNA ligase from Prochlorococcus marinus subsp. pastoris (strain CCMP1986 / NIES-2087 / MED4).